Reading from the N-terminus, the 508-residue chain is UDP-N-acetylmuramyl-tripeptide synthetase (508 aa).

S35 is a UDP-N-acetyl-alpha-D-muramoyl-L-alanyl-D-glutamate binding site. 118 to 124 is an ATP binding site; sequence GTDGKSS. UDP-N-acetyl-alpha-D-muramoyl-L-alanyl-D-glutamate-binding positions include 163–164, T190, and R200; that span reads ST. At K232 the chain carries N6-carboxylysine.

This sequence belongs to the MurCDEF family. MurE subfamily. Post-translationally, carboxylation is probably crucial for Mg(2+) binding and, consequently, for the gamma-phosphate positioning of ATP.

The protein resides in the cytoplasm. It participates in cell wall biogenesis; peptidoglycan biosynthesis. Functionally, catalyzes the addition of an amino acid to the nucleotide precursor UDP-N-acetylmuramoyl-L-alanyl-D-glutamate (UMAG) in the biosynthesis of bacterial cell-wall peptidoglycan. The sequence is that of UDP-N-acetylmuramyl-tripeptide synthetase from Borreliella burgdorferi (strain ATCC 35210 / DSM 4680 / CIP 102532 / B31) (Borrelia burgdorferi).